The primary structure comprises 497 residues: Apolipoprotein N-acyltransferase (497 aa).

6 helical membrane-spanning segments follow: residues 21 to 41, 51 to 71, 85 to 105, 119 to 139, 157 to 177, and 189 to 209; these read FAPF…ALLW, ALTG…WLYV, VLAL…TGWI, GMVA…FTGF, FAPV…AAWL, and FWLG…IHWT. The CN hydrolase domain maps to 221-461; it reads LQGNIPQNMK…GLHSTAQGFG (241 aa). Residue Glu259 is the Proton acceptor of the active site. Lys319 is an active-site residue. Cys371 serves as the catalytic Nucleophile. A helical membrane pass occupies residues 472–492; it reads SLVFALIGLLLLAGSLAAFSG.

It belongs to the CN hydrolase family. Apolipoprotein N-acyltransferase subfamily.

It localises to the cell inner membrane. The catalysed reaction is N-terminal S-1,2-diacyl-sn-glyceryl-L-cysteinyl-[lipoprotein] + a glycerophospholipid = N-acyl-S-1,2-diacyl-sn-glyceryl-L-cysteinyl-[lipoprotein] + a 2-acyl-sn-glycero-3-phospholipid + H(+). Its pathway is protein modification; lipoprotein biosynthesis (N-acyl transfer). Catalyzes the phospholipid dependent N-acylation of the N-terminal cysteine of apolipoprotein, the last step in lipoprotein maturation. In Nitrosomonas europaea (strain ATCC 19718 / CIP 103999 / KCTC 2705 / NBRC 14298), this protein is Apolipoprotein N-acyltransferase.